A 451-amino-acid chain; its full sequence is UPF0210 protein Asuc_1169 (451 aa).

The protein belongs to the UPF0210 family. As to quaternary structure, homodimer.

This is UPF0210 protein Asuc_1169 from Actinobacillus succinogenes (strain ATCC 55618 / DSM 22257 / CCUG 43843 / 130Z).